The following is a 503-amino-acid chain: Anhydrotetracycline monooxygenase (503 aa).

The protein belongs to the PheA/TfdB FAD monooxygenase family. FAD serves as cofactor.

It catalyses the reaction anhydrotetracycline + NADPH + O2 + H(+) = 5a,11a-dehydrotetracycline + NADP(+) + H2O. It functions in the pathway antibiotic biosynthesis; oxytetracycline biosynthesis. Catalyzes hydroxylation of the anthracycline structure at position C-6 during the biosynthesis of oxytetracyline. This chain is Anhydrotetracycline monooxygenase, found in Streptomyces rimosus.